The chain runs to 2372 residues: NBAS subunit of NRZ tethering complex (2372 aa).

WD repeat units lie at residues 119–158 (DPNP…LFII) and 304–343 (GEQD…LRGS). The disordered stretch occupies residues 447 to 468 (LESSVKGEEDDGDDDSDSDEEA). Residues 454–467 (EEDDGDDDSDSDEE) show a composition bias toward acidic residues. Positions 629-668 (YEDFLSMEEELEQRKERESKKRQELLKKVDFSKLTLEQKE) form a coiled coil.

The protein resides in the endoplasmic reticulum. Functionally, involved in Golgi-to-endoplasmic reticulum (ER) retrograde transport; the function is proposed to depend on its association in the NRZ complex which is believed to play a role in SNARE assembly at the ER. Required for normal embryonic development. May play a role in the nonsense-mediated decay pathway of mRNAs containing premature stop codons. The protein is NBAS subunit of NRZ tethering complex of Danio rerio (Zebrafish).